Here is a 177-residue protein sequence, read N- to C-terminus: Large ribosomal subunit protein uL6 (177 aa).

The protein belongs to the universal ribosomal protein uL6 family. As to quaternary structure, part of the 50S ribosomal subunit.

This protein binds to the 23S rRNA, and is important in its secondary structure. It is located near the subunit interface in the base of the L7/L12 stalk, and near the tRNA binding site of the peptidyltransferase center. In Rickettsia rickettsii (strain Iowa), this protein is Large ribosomal subunit protein uL6.